The sequence spans 487 residues: MMSKLDNQQLAKIRTMVPEMRRVERIHFVGIGGAGMSGIAEVLLNEGYRISGSDLAPNAVTDSLTQKGAEIFFGHAAENVNGASVVVVSTAIAQDNPELVAARELRIPVVRRAEMLAELMRYRHGIAIAGTHGKTTTTALMTQIYFEAGLDPTFVNGGLVKSAGTNARLGCSRYLIAEADESDASFLHLQPMVSVVTNIEADHMDTYGGDFEVLKQTFIDFLHNLPFYGLAVMCVDDPVVRELLPRIGRQIITYGFSDDADVRIVEYGQHAHQGHFTILRAGKPDLNVKLNIPGKHNALNATAAVAVATEEGVDDDAIIRALLEFEGTGRRFDHLGEFETGNGSVMLVDDYGHHPSEVDVTIQAARAGWEKKRLVMIFQPHRYSRTRDLYEDFAHVLEQVDVLLMLDVYSAGEVAIPGADGRSLCRTIRGRGKIDPIFVPTHEDLPSVLANILQNDDLLLTQGAGDVGKIARQLADLQLDIAAMRAE.

130 to 136 (GTHGKTT) is a binding site for ATP.

It belongs to the MurCDEF family.

The protein localises to the cytoplasm. The enzyme catalyses UDP-N-acetyl-alpha-D-muramate + L-alanine + ATP = UDP-N-acetyl-alpha-D-muramoyl-L-alanine + ADP + phosphate + H(+). It functions in the pathway cell wall biogenesis; peptidoglycan biosynthesis. Cell wall formation. This is UDP-N-acetylmuramate--L-alanine ligase from Photobacterium profundum (strain SS9).